Here is a 1330-residue protein sequence, read N- to C-terminus: ESX-3 secretion system protein EccC3 (1330 aa).

2 consecutive transmembrane segments (helical) span residues 43-63 (LPYLIGILIVGMIVALVATGM) and 65-85 (VISPQTLFFPFVLLLAATALY). 3 FtsK domains span residues 456–662 (GEPL…SVSR), 811–1000 (RDPL…RDSN), and 1090–1280 (LAPV…ADSG). Residues 479–486 (GMTGSGKS), 829–836 (GGPKSGKS), and 1107–1114 (GDARSGKT) each bind ATP.

Part of the ESX-3 / type VII secretion system (T7SS), which is composed of cytosolic and membrane components. The ESX-3 membrane complex is composed of EccB3, EccC3, EccD3 and EccE3.

Its subcellular location is the cell inner membrane. Functionally, part of the ESX-3 specialized secretion system, which is important for iron and zinc uptake or homeostasis. This is ESX-3 secretion system protein EccC3 from Mycobacterium tuberculosis (strain ATCC 25618 / H37Rv).